Here is a 379-residue protein sequence, read N- to C-terminus: Protein hairy (379 aa).

The tract at residues 20-50 is disordered; that stretch reads STQQQQQQQQHKEAPIKSDRRSNKPIMEKRR. A compositionally biased stretch (basic and acidic residues) spans 29 to 47; that stretch reads QHKEAPIKSDRRSNKPIME. Positions 36–55 are interaction with Topors; sequence KSDRRSNKPIMEKRRRARIN. Positions 38–95 constitute a bHLH domain; sequence DRRSNKPIMEKRRRARINNCLNELKTLILDATKKDPARHSKLEKADILEKTVKHLQEL. In terms of domain architecture, Orange spans 114-143; it reads FKAGFADCANEVSRFPGLDSTQRRRLLQHL. 2 disordered regions span residues 167-208 and 298-345; these read QSLH…NTTA and QRTA…VKPS. Low complexity-rich tracts occupy residues 182–207 and 301–328; these read PEQEPSVTPVAASGNNNSSSNNTNTT and ASTGSASSHSSAGYESAPSSSSSRGSYA. The WRPW motif motif lies at 376 to 379; it reads WRPW.

Transcription repression requires formation of a complex with a corepressor protein (Groucho).

It localises to the nucleus. In terms of biological role, pair-rule protein that regulates embryonic segmentation and adult bristle patterning. Transcriptional repressor of genes that require a bHLH protein for their transcription (e.g. ftz). The protein is Protein hairy of Drosophila virilis (Fruit fly).